A 130-amino-acid chain; its full sequence is Arsenate reductase 2.2 (130 aa).

Positions 18 to 119 (RDPRIAVVDV…WELSGRPVCR (102 aa)) constitute a Rhodanese domain. Cys70 functions as the Cysteine persulfide intermediate in the catalytic mechanism.

The enzyme catalyses [glutaredoxin]-dithiol + arsenate + glutathione + H(+) = glutathionyl-S-S-[glutaredoxin] + arsenite + H2O. Possesses arsenate reductase activity in vitro. Catalyzes the reduction of arsenate [As(V)] to arsenite [As(III)]. May play a role in arsenic retention in roots. Its function is as follows. Possesses phosphatase activity towards p-nitrophenyl phosphate in vitro. The polypeptide is Arsenate reductase 2.2 (ACR2.2) (Oryza sativa subsp. japonica (Rice)).